The sequence spans 498 residues: ATP synthase subunit beta, chloroplastic (498 aa).

172-179 serves as a coordination point for ATP; that stretch reads GGAGVGKT.

Belongs to the ATPase alpha/beta chains family. In terms of assembly, F-type ATPases have 2 components, CF(1) - the catalytic core - and CF(0) - the membrane proton channel. CF(1) has five subunits: alpha(3), beta(3), gamma(1), delta(1), epsilon(1). CF(0) has four main subunits: a(1), b(1), b'(1) and c(9-12).

The protein localises to the plastid. The protein resides in the chloroplast thylakoid membrane. The catalysed reaction is ATP + H2O + 4 H(+)(in) = ADP + phosphate + 5 H(+)(out). In terms of biological role, produces ATP from ADP in the presence of a proton gradient across the membrane. The catalytic sites are hosted primarily by the beta subunits. The polypeptide is ATP synthase subunit beta, chloroplastic (Hyphaene coriacea (Ilala palm)).